We begin with the raw amino-acid sequence, 324 residues long: T-cell acute lymphocytic leukemia protein 1 homolog (324 aa).

Positions 1 to 49 (MMEKLKSEQFPLSPSAEGCASPPRGDGDARGKQEGTTAETGEHRLPEEL) are disordered. The bHLH domain maps to 185-237 (VRRIFTNSRERWRQQNVNGAFAELRKLIPTHPPDKKLSKNEILRLAMKYINFL). A disordered region spans residues 276–324 (SPNSSCGSLLDGDASPESFTEDQDSSVESRPSARGLHHSSLPLDGNAQR).

In terms of tissue distribution, expressed in hemopoietic and endothelial lineages. Isoform beta emerges first, expressing in the entire anterior and posterior lateral mesoderm (ALM and PLM respectively), and in the ventral wall of the dorsal aorta, where definitive hemopoiesis begins. Isoform alpha expresses later as two pairs of stripes in the PLM and ALM, and becomes restricted to the intermediate cell mass (ICM) by the 18-somite stage. The ICM is the key site of primitive hemopoiesis, giving rise to the erythroid lineage. Also expressed in all stages of endocardial cell migration and in the developing midbrain, hindbrain and spinal cord. In adults, expressed in the main hemopoietic organs, namely the kidney (where isoform alpha is the predominant isoform) and the spleen. Also expressed in the liver, gill and gonads.

It localises to the nucleus. Functionally, transcription factor that plays a pivotal role in hemopoietic and endothelial development, acting synergistically with lmo2 and downstream of clo. Specifies mesodermal precursors to a hemangioblast cell fate. Hemangioblasts are bipotential precursors of blood and endothelium, and in the absence of hemopoietic induction cues such as gata1, tal1/scl-lmo2-induced hemangioblasts differentiate into endothelial cells. Isoform alpha and isoform beta are redundant for the initiation of primitive hemopoiesis but have distinct roles in the regulation of primitive erythroid differentiation and definitive hemopoietic stem cell specification, most likely due to differences in expression levels. Specification of definitive hemopoietic stem cells requires isoform beta. DNA binding is required for erythroid maturation, but not for its other hemopoietic functions. Endothelial roles include development of the dorsal aorta, the site of definitive hemopoiesis in the embryo. Required for angiogenesis but not angioblast specification. Has an additional role in endocardium formation during heart development. May play a role in central nervous system development. The polypeptide is T-cell acute lymphocytic leukemia protein 1 homolog (Danio rerio (Zebrafish)).